Reading from the N-terminus, the 507-residue chain is Glycerol kinase (507 aa).

T12 provides a ligand contact to ADP. T12, T13, and S14 together coordinate ATP. T12 is a sn-glycerol 3-phosphate binding site. Position 16 (R16) interacts with ADP. R82, E83, Y134, and D250 together coordinate sn-glycerol 3-phosphate. The glycerol site is built by R82, E83, Y134, D250, and Q251. ADP is bound by residues T272 and G316. Residues T272, G316, Q320, and G417 each contribute to the ATP site. Positions 417 and 421 each coordinate ADP.

The protein belongs to the FGGY kinase family.

It carries out the reaction glycerol + ATP = sn-glycerol 3-phosphate + ADP + H(+). The protein operates within polyol metabolism; glycerol degradation via glycerol kinase pathway; sn-glycerol 3-phosphate from glycerol: step 1/1. With respect to regulation, inhibited by fructose 1,6-bisphosphate (FBP). Key enzyme in the regulation of glycerol uptake and metabolism. Catalyzes the phosphorylation of glycerol to yield sn-glycerol 3-phosphate. This is Glycerol kinase from Beijerinckia indica subsp. indica (strain ATCC 9039 / DSM 1715 / NCIMB 8712).